Consider the following 437-residue polypeptide: Aspartate--tRNA(Asp/Asn) ligase (437 aa).

An L-aspartate-binding site is contributed by Glu175. The tract at residues 197-200 (QLYK) is aspartate. Arg219 serves as a coordination point for L-aspartate. ATP contacts are provided by residues 219–221 (RAE), 227–229 (RHL), and Glu360. Residues Glu360 and Ser363 each contribute to the Mg(2+) site. Residues Ser363 and Arg367 each coordinate L-aspartate. 408-411 (GAER) is a binding site for ATP.

The protein belongs to the class-II aminoacyl-tRNA synthetase family. Type 2 subfamily. As to quaternary structure, homodimer. Requires Mg(2+) as cofactor.

It is found in the cytoplasm. It carries out the reaction tRNA(Asx) + L-aspartate + ATP = L-aspartyl-tRNA(Asx) + AMP + diphosphate. Functionally, aspartyl-tRNA synthetase with relaxed tRNA specificity since it is able to aspartylate not only its cognate tRNA(Asp) but also tRNA(Asn). Reaction proceeds in two steps: L-aspartate is first activated by ATP to form Asp-AMP and then transferred to the acceptor end of tRNA(Asp/Asn). In Methanothermobacter thermautotrophicus (strain ATCC 29096 / DSM 1053 / JCM 10044 / NBRC 100330 / Delta H) (Methanobacterium thermoautotrophicum), this protein is Aspartate--tRNA(Asp/Asn) ligase.